Consider the following 130-residue polypeptide: Ribonuclease pancreatic (130 aa).

A signal peptide spans 1–6 (VQPSLG). 2 residues coordinate substrate: K13 and R16. Residue H18 is the Proton acceptor of the active site. 4 cysteine pairs are disulfide-bonded: C32-C90, C46-C101, C64-C116, and C71-C78. N-linked (GlcNAc...) asparagine glycosylation occurs at N40. Substrate-binding positions include 47–51 (KPVNT), K72, and R91. The Proton donor role is filled by H125.

Belongs to the pancreatic ribonuclease family. In terms of assembly, monomer. Interacts with and forms tight 1:1 complexes with RNH1. Dimerization of two such complexes may occur. Interaction with RNH1 inhibits this protein. Pancreas.

The protein resides in the secreted. It catalyses the reaction an [RNA] containing cytidine + H2O = an [RNA]-3'-cytidine-3'-phosphate + a 5'-hydroxy-ribonucleotide-3'-[RNA].. The catalysed reaction is an [RNA] containing uridine + H2O = an [RNA]-3'-uridine-3'-phosphate + a 5'-hydroxy-ribonucleotide-3'-[RNA].. Functionally, endonuclease that catalyzes the cleavage of RNA on the 3' side of pyrimidine nucleotides. Acts on single-stranded and double-stranded RNA. In Cricetulus griseus (Chinese hamster), this protein is Ribonuclease pancreatic (RNASE1).